The sequence spans 230 residues: Ribose-5-phosphate isomerase A (230 aa).

Substrate-binding positions include 32 to 35 (TGST), 85 to 88 (DGAD), and 98 to 101 (KGGG). Glutamate 107 functions as the Proton acceptor in the catalytic mechanism. A substrate-binding site is contributed by lysine 125.

Belongs to the ribose 5-phosphate isomerase family. Homodimer.

The catalysed reaction is aldehydo-D-ribose 5-phosphate = D-ribulose 5-phosphate. Its pathway is carbohydrate degradation; pentose phosphate pathway; D-ribose 5-phosphate from D-ribulose 5-phosphate (non-oxidative stage): step 1/1. In terms of biological role, catalyzes the reversible conversion of ribose-5-phosphate to ribulose 5-phosphate. The sequence is that of Ribose-5-phosphate isomerase A from Burkholderia vietnamiensis (strain G4 / LMG 22486) (Burkholderia cepacia (strain R1808)).